A 363-amino-acid chain; its full sequence is Uptake hydrogenase small subunit (363 aa).

A signal peptide (tat-type signal) is located at residues 1–46; that stretch reads MGAATETFYSVIRRQGITRRSFHKFCSLTATSLGLGPLAASRIANA. Residues Cys63, Cys66, Cys161, Cys195, His233, Cys236, Cys261, and Cys267 each coordinate [4Fe-4S] cluster. [3Fe-4S] cluster contacts are provided by Cys276, Cys295, and Cys298.

Belongs to the [NiFe]/[NiFeSe] hydrogenase small subunit family. Heterodimer of a large and a small subunit. It depends on [4Fe-4S] cluster as a cofactor. [3Fe-4S] cluster is required as a cofactor. Post-translationally, predicted to be exported by the Tat system. The position of the signal peptide cleavage has not been experimentally proven.

The protein localises to the cell membrane. It carries out the reaction H2 + A = AH2. In terms of biological role, this enzyme recycles the H(2) produced by nitrogenase to increase the production of ATP and to protect nitrogenase against inhibition or damage by O(2) under carbon- or phosphate-limited conditions. In Bradyrhizobium diazoefficiens (strain JCM 10833 / BCRC 13528 / IAM 13628 / NBRC 14792 / USDA 110), this protein is Uptake hydrogenase small subunit (hupA).